Consider the following 331-residue polypeptide: MARMYYDADANLDLLADKTVAIIGYGSQGHAHALNLKDSGINVVVGLYPGSKSRQKAEDAGLKVMNVADAASAADWIMILLPDEVQKAVYQEDIEPNLREGKVLSFAHGFNIHFGQIVPPETVDVIMVAPKGPGHLVRRTYEQGEGVPCLFAVYQDASGQARDRAMAYAKGIGGTRAGILETSFREETETDLFGEQVVLCGGLSALIKSGFETLVAAGYQPELAYFECLHEVKLIVDLIVEGGLAKMRDSISNTAEYGDLTRGPRIVTDETRAEMKQILREIQSGQFAREFVLENQSGKPGFTAMRRQEAEHPIEEVGKDLRAMFSWLKDK.

The region spanning 2–182 (ARMYYDADAN…GGTRAGILET (181 aa)) is the KARI N-terminal Rossmann domain. Residues 25-28 (YGSQ), S51, S53, and 83-86 (DEVQ) contribute to the NADP(+) site. The active site involves H108. G134 serves as a coordination point for NADP(+). In terms of domain architecture, KARI C-terminal knotted spans 183–328 (SFREETETDL…KDLRAMFSWL (146 aa)). D191, E195, E227, and E231 together coordinate Mg(2+). S252 contacts substrate.

This sequence belongs to the ketol-acid reductoisomerase family. Requires Mg(2+) as cofactor.

The catalysed reaction is (2R)-2,3-dihydroxy-3-methylbutanoate + NADP(+) = (2S)-2-acetolactate + NADPH + H(+). The enzyme catalyses (2R,3R)-2,3-dihydroxy-3-methylpentanoate + NADP(+) = (S)-2-ethyl-2-hydroxy-3-oxobutanoate + NADPH + H(+). It functions in the pathway amino-acid biosynthesis; L-isoleucine biosynthesis; L-isoleucine from 2-oxobutanoate: step 2/4. The protein operates within amino-acid biosynthesis; L-valine biosynthesis; L-valine from pyruvate: step 2/4. Involved in the biosynthesis of branched-chain amino acids (BCAA). Catalyzes an alkyl-migration followed by a ketol-acid reduction of (S)-2-acetolactate (S2AL) to yield (R)-2,3-dihydroxy-isovalerate. In the isomerase reaction, S2AL is rearranged via a Mg-dependent methyl migration to produce 3-hydroxy-3-methyl-2-ketobutyrate (HMKB). In the reductase reaction, this 2-ketoacid undergoes a metal-dependent reduction by NADPH to yield (R)-2,3-dihydroxy-isovalerate. This chain is Ketol-acid reductoisomerase (NADP(+)), found in Crocosphaera subtropica (strain ATCC 51142 / BH68) (Cyanothece sp. (strain ATCC 51142)).